Consider the following 266-residue polypeptide: Imidazole glycerol phosphate synthase subunit HisF (266 aa).

Catalysis depends on residues Asp11 and Asp130.

This sequence belongs to the HisA/HisF family. As to quaternary structure, heterodimer of HisH and HisF.

The protein localises to the cytoplasm. The enzyme catalyses 5-[(5-phospho-1-deoxy-D-ribulos-1-ylimino)methylamino]-1-(5-phospho-beta-D-ribosyl)imidazole-4-carboxamide + L-glutamine = D-erythro-1-(imidazol-4-yl)glycerol 3-phosphate + 5-amino-1-(5-phospho-beta-D-ribosyl)imidazole-4-carboxamide + L-glutamate + H(+). The protein operates within amino-acid biosynthesis; L-histidine biosynthesis; L-histidine from 5-phospho-alpha-D-ribose 1-diphosphate: step 5/9. In terms of biological role, IGPS catalyzes the conversion of PRFAR and glutamine to IGP, AICAR and glutamate. The HisF subunit catalyzes the cyclization activity that produces IGP and AICAR from PRFAR using the ammonia provided by the HisH subunit. This chain is Imidazole glycerol phosphate synthase subunit HisF, found in Delftia acidovorans (strain DSM 14801 / SPH-1).